The primary structure comprises 564 residues: Adenine deaminase (564 aa).

This sequence belongs to the metallo-dependent hydrolases superfamily. Adenine deaminase family. Mn(2+) is required as a cofactor.

It carries out the reaction adenine + H2O + H(+) = hypoxanthine + NH4(+). This chain is Adenine deaminase, found in Deinococcus geothermalis (strain DSM 11300 / CIP 105573 / AG-3a).